Consider the following 321-residue polypeptide: Acetyl-coenzyme A carboxylase carboxyl transferase subunit beta, chloroplastic (321 aa).

One can recognise a CoA carboxyltransferase N-terminal domain in the interval 47 to 321 (LWAQCDNCEN…FWFYVLRSSL (275 aa)). Zn(2+)-binding residues include C51, C54, C70, and C73. Residues 51 to 73 (CDNCENLLYLRFLRENQSVCKEC) form a C4-type zinc finger.

It belongs to the AccD/PCCB family. Acetyl-CoA carboxylase is a heterohexamer composed of biotin carboxyl carrier protein, biotin carboxylase and 2 subunits each of ACCase subunit alpha and ACCase plastid-coded subunit beta (accD). The cofactor is Zn(2+).

The protein localises to the plastid. It localises to the chloroplast stroma. The catalysed reaction is N(6)-carboxybiotinyl-L-lysyl-[protein] + acetyl-CoA = N(6)-biotinyl-L-lysyl-[protein] + malonyl-CoA. It participates in lipid metabolism; malonyl-CoA biosynthesis; malonyl-CoA from acetyl-CoA: step 1/1. Its function is as follows. Component of the acetyl coenzyme A carboxylase (ACC) complex. Biotin carboxylase (BC) catalyzes the carboxylation of biotin on its carrier protein (BCCP) and then the CO(2) group is transferred by the transcarboxylase to acetyl-CoA to form malonyl-CoA. The protein is Acetyl-coenzyme A carboxylase carboxyl transferase subunit beta, chloroplastic of Pinus thunbergii (Japanese black pine).